The following is a 2327-amino-acid chain: MNTTDCFIAVVNAIKEVRALFLPRTAGKMEFTLHDGEKKVFYSRPNNHDNCWLNTILQLFRYVDEPFFDWVYNSPENLTLEAIKQLEELTGLELREGGPPALVIWNIKHLLHTGIGTASRPSEVCMVDGTDMCLADFHAGIFMKGREHAVFACVTSNGWYAIDDEDFYPWTPDPSDVLVFVPYDQEPLNEGWKASVQRKLKGAGQSSPATGSQNQSGNTGSIINNYYMQQYQNSMDTQLGDNAISGGSNEGSTDTTSTHTTNTQNNDWFSKLASSAFSGLFGALLADKKTEETTLLEDRILTTRNGHTTSTTQSSVGVTFGYATAEDSTSGPNTSGLETRVHQAERFFKMALFDWVPSQNFGHMHKVVLPHEPKGVYGGLVKSYAYMRNGWDVEVTAVGNQFNGGCLLVALVPEMGDISDREKYQLTLYPHQFINPRTNMTAHITVPYVGVNRYDQYKQHRPWTLVVMVVAPLTTNTAGAQQIKVYANIAPTNVHVAGELPSKEGIFPVACSDGYGNMVTTDPKTADPAYGKVYNPPRTALPGRFTNYLDVAEACPTFLMFENVPYVSTRTDGQRLLAKFDVSLAAKHMSNTYLAGLAQYYTQYTGTINLHFMFTGPTDAKARYMVAYVPPGMDAPDNPEEAAHCIHAEWDTGLNSKFTFSIPYISAADYAYTASHEAETTCVQGWVCVYQITHGKADADALVVSASAGKDFELRLPVDARQQTTTTGESADPVTTTVENYGGETQVQRRHHTDVAFVLDRFVKVTVSDNQHTLDVMQAHKDNIVGALLRAATYYFSDLEIAVTHTGKLTWVPNGAPVSALNNTTNPTAYHKGPVTRLALPYTAPHRVLATAYTGTTTYTASARGDLAHLTTTHARHLPTSFNFGAVKAETITELLVRMKRAELYCPRPILPIQPTGDRHKQPLVAPAKQLLNFDLLKLAGDVESNPGPFFFSDVRSNFSKLVETINQMQEDMSTKHGPDFNRLVSAFEELASGVKAIRTGLDEAKPWYKLIKLLSRLSCMAAVAARSKDPVLVAIMLADTGLEILDSTFVVKKISDSLSSLFHVPAPAFSFGAPILLAGLVKVASSFFRSTPEDLERAEKQLKARDINDIFAILKNGEWLVKLILAIRDWIKAWIASEEKFVTMTDLVPGILEKQRDLNDPSKYKDAKEWLDNTRQVCLKSGNVHIANLCKVVAPAPSKSRPEPVVVCLRGKSGQGKSFLANVLAQAISTHLTGRTDSVWYCPPDPDHFDGYNQQTVVVMDDLGQNPDGKDFKYFAQMVSTTGFIPPMASLEDKGKPFSSKVIIATTNLYSGFTPKTMVCPDALNRRFHFDIDVSAKDGYKINNKLDIIKALEDTHTNPVAMFQYDCALLNGMAVEMKRLQQDMFKPQPPLQNVYQLVQEVIERVELHEKVSSHPIFKQISIPSQKSVLYFLIEKGQHEAAIEFFEGMVHDSIKEELRPLIQQTSFVKRAFKRLKENFEIVALCLTLLANIVIMIRETHKRQKMVDDAVNEYIEKANITTDDQTLDEAEKNPLETSGASTVGFRERTLPGQKARDDVNSEPAQPTEEQPQAEGPYAGPLERQRPLKVRAKLPRQEGPYAGPMERQKPLKVKARAPVVKEGPYEGPVKKPVALKVKAKNLIVTESGAPPTDLQKMVMGNTKPVELILDGKTVAICCATGVFGTAYLVPRHLFAEKYDKIMLDGRALTDSDYRVFEFEIKVKGQDMLSDAALMVLHRGNRVRDITKHFRDVARMKKGTPVVGVINNADVGRLIFSGEALTYKDIVVCMDGDTMPGLFAYKAATKAGYCGGAVLAKDGADTFIVGTHSAGGNGVGYCSCVSRSMLLKMKAHIDPEPHHEGLIVDTRDVEERVHVMRKTKLAPTVAHGVFNPEFGPAALSNKDPRLNEGVVLDEVIFSKHKGDTKMSAEDKALFRRCAADYASRLHSVLGTANAPLSIYEAIKGVDGLDAMEPDTAPGLPWALQGKRRGALIDFENGTVGPEVEAALKLMEKREYKFACQTFLKDEIRPMEKVRAGKTRIVDVLPVEHILYTRMMIGRFCAQMHSNNGPQIGSAVGCNPDVDWQRFGTHFAQYRNVWDVDYSAFDANHCSDAMNIMFEEVFRTEFGFHPNAEWILKTLVNTEHAYENKRITVEGGMPSGCSATSIINTILNNIYVLYALRRHYEGVELDTYTMISYGDDIVVASDYDLDFEALKPHFKSLGQTITPADKSDKGFVLGHSITDVTFLKRHFHMDYGTGFYKPVMASKTLEAILSFARRGTIQEKLISVAGLAVHSGPDEYRRLFEPFQGLFEIPSYRSLYLRWVNAVCGDA.

A Peptidase C28 domain is found at 1–201 (MNTTDCFIAV…WKASVQRKLK (201 aa)). Topologically, residues 1–1475 (MNTTDCFIAV…SFVKRAFKRL (1475 aa)) are cytoplasmic. Catalysis depends on for leader protease activity residues cysteine 51, histidine 148, and aspartate 163. 2 disordered regions span residues 196 to 218 (VQRKLKGAGQSSPATGSQNQSGN) and 238 to 265 (QLGDNAISGGSNEGSTDTTSTHTTNTQN). A lipid anchor (N-myristoyl glycine; by host) is attached at glycine 202. Polar residues-rich tracts occupy residues 204–218 (GQSSPATGSQNQSGN) and 238–251 (QLGDNAISGGSNEG). Over residues 252-265 (STDTTSTHTTNTQN) the composition is skewed to low complexity. The tract at residues 787–795 (ALLRAATYY) is antigenic epitope. The Cell attachment site signature appears at 864 to 866 (RGD). An SF3 helicase domain is found at 1184–1348 (NVHIANLCKV…DGYKINNKLD (165 aa)). 1212-1219 (GKSGQGKS) provides a ligand contact to ATP. Residues 1476 to 1496 (KENFEIVALCLTLLANIVIMI) lie within the membrane without spanning it. Residues 1497–2327 (RETHKRQKMV…RWVNAVCGDA (831 aa)) are Cytoplasmic-facing. The disordered stretch occupies residues 1524–1584 (QTLDEAEKNP…PYAGPLERQR (61 aa)). Basic and acidic residues predominate over residues 1544–1558 (FRERTLPGQKARDDV). O-(5'-phospho-RNA)-tyrosine occurs at positions 1576, 1599, and 1623. The region spanning 1647–1843 (APPTDLQKMV…YCSCVSRSML (197 aa)) is the Peptidase C3 domain. The active-site For protease 3C activity; Proton donor/acceptor is the histidine 1690. Residues aspartate 1728 and cysteine 1807 each act as for protease 3C activity in the active site. The Nuclear localization signal signature appears at 1873–1881 (MRKTKLAPT). The 119-residue stretch at 2091–2209 (RNVWDVDYSA…ASDYDLDFEA (119 aa)) folds into the RdRp catalytic domain. The active-site For RdRp activity is aspartate 2195.

It belongs to the picornaviruses polyprotein family. As to quaternary structure, interacts with host ISG15. In terms of assembly, interacts (via R-G-D motif) with host ITGAV/ITGB6. Interacts with host MAVS; this interaction inhibits binding of host TRAF3 to MAVS, thereby suppressing interferon-mediated responses. Forms homooligomers. As to quaternary structure, homohexamer. Interacts with host VIM. Interacts with host BECN1. In terms of assembly, interacts with host DCTN3. Interacts with RNA-dependent RNA polymerase; this interaction allows 3B-1 to binds 2 polymerases and act as a primer. It also allows the recruitment of the RNA-dependent RNA polymerase to host membranes. As to quaternary structure, interacts with RNA-dependent RNA polymerase; this interaction allows 3B-2 to act as a primer. In terms of assembly, interacts with RNA-dependent RNA polymerase; this interaction allows 3B-3 to act as a primer. Interacts with 3B-1; this interaction allows 3B-1 to binds 2 polymerases and act as a primer. It also allows the recruitment of the RNA-dependent RNA polymerase to host membranes. Interacts with 3B-2; this interaction allows 3B-2 to act as a primer. Interacts with 3B-3; this interaction allows 3B-3 to act as a primer. Removes six residues from its own C-terminus, generating sLb(pro). In terms of processing, specific enzymatic cleavages in vivo by the viral proteases yield a variety of precursors and mature proteins. The polyprotein seems to be cotranslationally cleaved at the 2A/2B junction by a ribosomal skip from one codon to the next without formation of a peptide bond. This process would release the L-P1-2A peptide from the translational complex. Post-translationally, during virion maturation, immature virions are rendered infectious following cleavage of VP0 into VP4 and VP2. This maturation seems to be an autocatalytic event triggered by the presence of RNA in the capsid and is followed by a conformational change of the particle. Myristoylation is required during RNA encapsidation and formation of the mature virus particle. In terms of processing, uridylylated by the polymerase and covalently linked to the 5'-end of genomic RNA. These uridylylated forms act as a nucleotide-peptide primer for the polymerase.

It localises to the host nucleus. The protein resides in the host cytoplasm. The protein localises to the virion. It is found in the host endoplasmic reticulum membrane. Its subcellular location is the host cytoplasmic vesicle membrane. The enzyme catalyses Autocatalytically cleaves itself from the polyprotein of the foot-and-mouth disease virus by hydrolysis of a Lys-|-Gly bond, but then cleaves host cell initiation factor eIF-4G at bonds -Gly-|-Arg- and -Lys-|-Arg-.. The catalysed reaction is a ribonucleoside 5'-triphosphate + H2O = a ribonucleoside 5'-diphosphate + phosphate + H(+). It carries out the reaction RNA(n) + a ribonucleoside 5'-triphosphate = RNA(n+1) + diphosphate. It catalyses the reaction Selective cleavage of Gln-|-Gly bond in the poliovirus polyprotein. In other picornavirus reactions Glu may be substituted for Gln, and Ser or Thr for Gly.. Its function is as follows. Autocatalytically cleaves itself from the polyprotein at the L/VP0 junction. Also cleaves the host translation initiation factors EIF4G1 and EIF4G3, in order to shut off the capped cellular mRNA transcription. Plays a role in counteracting host innate antiviral response using diverse mechanisms. Possesses a deubiquitinase activity acting on both 'Lys-48' and 'Lys-63'-linked polyubiquitin chains. In turn, inhibits the ubiquitination and subsequent activation of key signaling molecules of type I IFN response such as host RIGI, TBK1, TRAF3 and TRAF6. Inhibits host NF-kappa-B activity by inducing a decrease in RELA mRNA levels. Cleaves a peptide bond in the C-terminus of host ISG15, resulting in the damaging of this modifier that can no longer be attached to target proteins. Also cleaves host G3BP1 and G3BP2 in order to inhibit cytoplasmic stress granules assembly. In terms of biological role, lies on the inner surface of the capsid shell. After binding to the host receptor, the capsid undergoes conformational changes. Capsid protein VP4 is released, capsid protein VP1 N-terminus is externalized, and together, they shape a pore in the host membrane through which the viral genome is translocated into the host cell cytoplasm. After genome has been released, the channel shrinks. Forms an icosahedral capsid of pseudo T=3 symmetry with capsid proteins VP1 and VP3. The capsid is composed of 60 copies of each capsid protein organized in the form of twelve pentamers and encloses the viral positive strand RNA genome. Upon acidifcation in the endosome, dissociates into pentamers. Functionally, forms an icosahedral capsid of pseudo T=3 symmetry with capsid proteins VP0 and VP3. The capsid is composed of 60 copies of each capsid protein organized in the form of twelve pentamers and encloses the viral positive strand RNA genome. Upon acidifcation in the endosome, dissociates into pentamers. Its function is as follows. Forms an icosahedral capsid of pseudo T=3 symmetry with capsid proteins VP2 and VP3. The capsid is composed of 60 copies of each capsid protein organized in the form of twelve pentamers and encloses the viral positive strand RNA genome. Mediates cell entry by attachment to an integrin receptor, usually host ITGAV/ITGB6. In addition, targets host MAVS to suppress type I IFN pathway. Upon acidifcation in the endosome, dissociates into pentamers. In terms of biological role, mediates self-processing of the polyprotein by a translational effect termed 'ribosome skipping'. Mechanistically, 2A-mediated cleavage occurs between the C-terminal glycine and the proline of the downstream protein 2B. In the case of foot-and-mouth disease virus, the 2A oligopeptide is post-translationally 'trimmed' from the C-terminus of the upstream protein 1D by 3C proteinase. Plays an essential role in the virus replication cycle by acting as a viroporin. Creates a pore in the host endoplasmic reticulum and as a consequence releases Ca2+ in the cytoplasm of infected cell. In turn, high levels of cytoplasmic calcium may trigger membrane trafficking and transport of viral ER-associated proteins to viroplasms, sites of viral genome replication. Functionally, associates with and induces structural rearrangements of intracellular membranes. Triggers host autophagy by interacting with host BECN1 and thereby promotes viral replication. Participates in viral replication and interacts with host DHX9. Displays RNA-binding, nucleotide binding and NTPase activities. May play a role in virion morphogenesis and viral RNA encapsidation by interacting with the capsid protein VP3. Its function is as follows. Plays important roles in virus replication, virulence and host range. Cooperates with host DDX56 to inhibit IRF3 nuclear translocation and subsequent type I interferon production. In terms of biological role, covalently linked to the 5'-end of both the positive-strand and negative-strand genomic RNAs. Acts as a genome-linked replication primer. Cysteine protease that generates mature viral proteins from the precursor polyprotein. In addition to its proteolytic activity, binds to viral RNA and thus influences viral genome replication. RNA and substrate bind cooperatively to the protease. Functionally, RNA-directed RNA polymerase 3D-POL replicates genomic and antigenomic RNA by recognizing replications specific signals. Covalently attaches UMP to a tyrosine of VPg, which is used to prime RNA synthesis. The positive stranded RNA genome is first replicated at virus induced membranous vesicles, creating a dsRNA genomic replication form. This dsRNA is then used as template to synthesize positive stranded RNA genomes. ss(+)RNA genomes are either translated, replicated or encapsidated. The sequence is that of Genome polyprotein from Bos taurus (Bovine).